Consider the following 317-residue polypeptide: tRNA dimethylallyltransferase (317 aa).

An ATP-binding site is contributed by 14–21; that stretch reads GPTAVGKT. 16 to 21 lines the substrate pocket; sequence TAVGKT. The segment at 39–42 is interaction with substrate tRNA; it reads DSMQ.

Belongs to the IPP transferase family. Monomer. Mg(2+) is required as a cofactor.

The enzyme catalyses adenosine(37) in tRNA + dimethylallyl diphosphate = N(6)-dimethylallyladenosine(37) in tRNA + diphosphate. Its function is as follows. Catalyzes the transfer of a dimethylallyl group onto the adenine at position 37 in tRNAs that read codons beginning with uridine, leading to the formation of N6-(dimethylallyl)adenosine (i(6)A). The protein is tRNA dimethylallyltransferase of Bacillus cereus (strain ATCC 14579 / DSM 31 / CCUG 7414 / JCM 2152 / NBRC 15305 / NCIMB 9373 / NCTC 2599 / NRRL B-3711).